A 534-amino-acid chain; its full sequence is CTP synthase (534 aa).

The interval 1–267 (MTKYIFVTGG…DQIVCDHLKL (267 aa)) is amidoligase domain. S13 serves as a coordination point for CTP. S13 lines the UTP pocket. 14-19 (SIGKGI) serves as a coordination point for ATP. Y54 lines the L-glutamine pocket. D71 lines the ATP pocket. Mg(2+) is bound by residues D71 and E141. CTP contacts are provided by residues 148–150 (DIE), 188–193 (KTKPTQ), and K224. Residues 188–193 (KTKPTQ) and K224 contribute to the UTP site. Position 240–242 (240–242 (RNV)) interacts with ATP. Residues 292–534 (KIALVGKYVE…FVTAAIKNSN (243 aa)) form the Glutamine amidotransferase type-1 domain. G354 serves as a coordination point for L-glutamine. The active-site Nucleophile; for glutamine hydrolysis is the C381. Residues 382 to 385 (LGMQ), E405, and R463 contribute to the L-glutamine site. Active-site residues include H508 and E510.

Belongs to the CTP synthase family. As to quaternary structure, homotetramer.

It carries out the reaction UTP + L-glutamine + ATP + H2O = CTP + L-glutamate + ADP + phosphate + 2 H(+). It catalyses the reaction L-glutamine + H2O = L-glutamate + NH4(+). The catalysed reaction is UTP + NH4(+) + ATP = CTP + ADP + phosphate + 2 H(+). It participates in pyrimidine metabolism; CTP biosynthesis via de novo pathway; CTP from UDP: step 2/2. With respect to regulation, allosterically activated by GTP, when glutamine is the substrate; GTP has no effect on the reaction when ammonia is the substrate. The allosteric effector GTP functions by stabilizing the protein conformation that binds the tetrahedral intermediate(s) formed during glutamine hydrolysis. Inhibited by the product CTP, via allosteric rather than competitive inhibition. Catalyzes the ATP-dependent amination of UTP to CTP with either L-glutamine or ammonia as the source of nitrogen. Regulates intracellular CTP levels through interactions with the four ribonucleotide triphosphates. The chain is CTP synthase from Streptococcus pyogenes serotype M28 (strain MGAS6180).